The primary structure comprises 329 residues: Neuropeptides B/W receptor type 1 (329 aa).

Residues Met1–Pro43 lie on the Extracellular side of the membrane. 3 N-linked (GlcNAc...) asparagine glycosylation sites follow: Asn3, Asn13, and Asn25. The helical transmembrane segment at Val44–Leu64 threads the bilayer. Residues Leu65 to Asn75 are Cytoplasmic-facing. The helical transmembrane segment at Val76 to Ile96 threads the bilayer. The Extracellular segment spans residues Ala97–Lys112. An intrachain disulfide couples Cys111 to Cys190. The chain crosses the membrane as a helical span at residues Leu113–Ser133. Over Ala134–Arg158 the chain is Cytoplasmic. Residues Ala159–Ala179 form a helical membrane-spanning segment. The Extracellular portion of the chain corresponds to Arg180 to Thr209. Residues Leu210–Cys230 form a helical membrane-spanning segment. Topologically, residues Arg231–Arg250 are cytoplasmic. The helical transmembrane segment at Val251–Leu271 threads the bilayer. Residues Ser272–Gly289 are Extracellular-facing. The helical transmembrane segment at Ile290–Leu312 threads the bilayer. At Asp313 to Ala329 the chain is on the cytoplasmic side.

This sequence belongs to the G-protein coupled receptor 1 family.

It localises to the cell membrane. Its function is as follows. Interacts specifically with a number of opioid ligands. Receptor for neuropeptides B and W, which may be involved in neuroendocrine system regulation, food intake and the organization of other signals. This is Neuropeptides B/W receptor type 1 (Npbwr1) from Mus musculus (Mouse).